Here is a 184-residue protein sequence, read N- to C-terminus: Photosystem I assembly protein Ycf4 (184 aa).

Transmembrane regions (helical) follow at residues 22–42 (FFWA…GTSS) and 57–77 (IIFF…LFIS).

Belongs to the Ycf4 family.

It is found in the plastid. It localises to the chloroplast thylakoid membrane. Functionally, seems to be required for the assembly of the photosystem I complex. This chain is Photosystem I assembly protein Ycf4, found in Aethionema cordifolium (Lebanon stonecress).